A 203-amino-acid polypeptide reads, in one-letter code: Adenylyl-sulfate kinase (203 aa).

Residue Gly-35 to Ser-42 participates in ATP binding. Ser-109 (phosphoserine intermediate) is an active-site residue.

It belongs to the APS kinase family.

It carries out the reaction adenosine 5'-phosphosulfate + ATP = 3'-phosphoadenylyl sulfate + ADP + H(+). It functions in the pathway sulfur metabolism; hydrogen sulfide biosynthesis; sulfite from sulfate: step 2/3. Functionally, catalyzes the synthesis of activated sulfate. The chain is Adenylyl-sulfate kinase from Geotalea daltonii (strain DSM 22248 / JCM 15807 / FRC-32) (Geobacter daltonii).